Consider the following 290-residue polypeptide: Membrane protein insertase YidC 2 (290 aa).

A signal peptide spans 1–19 (MKKKALLPLFLGIMIFLAG). A lipid anchor (N-palmitoyl cysteine) is attached at Cys-20. Cys-20 is lipidated: S-diacylglycerol cysteine. A run of 5 helical transmembrane segments spans residues 56–76 (FGLA…PFML), 134–154 (MLGC…YFVL), 176–196 (PDIW…VVSS), 211–231 (MVIS…ALGL), and 232–252 (YWSV…IYYS). A disordered region spans residues 266 to 290 (YEREHNPSSKKKGKNTQVVSKKNKK). The segment covering 280–290 (NTQVVSKKNKK) has biased composition (polar residues).

It belongs to the OXA1/ALB3/YidC family. Type 2 subfamily.

It is found in the cell membrane. Required for the insertion and/or proper folding and/or complex formation of integral membrane proteins into the membrane. Involved in integration of membrane proteins that insert both dependently and independently of the Sec translocase complex, as well as at least some lipoproteins. The protein is Membrane protein insertase YidC 2 of Staphylococcus epidermidis (strain ATCC 35984 / DSM 28319 / BCRC 17069 / CCUG 31568 / BM 3577 / RP62A).